Here is a 161-residue protein sequence, read N- to C-terminus: MTKKDKKEVKVQTVTTEDGETVKVFEDLQGFETFIANETEDDDFDHLHCKLNYYPPFVLHESHEDPEKISDAANSHSKKFVRHLHQHIEKHLLKDIKQAVRKPELKFHEKSKEETFDKITWHYGEETEYHGRPFKIDVQVVCTHEDAMVFVDYKTHPVGAN.

Residue Lys68 forms a Glycyl lysine isopeptide (Lys-Gly) (interchain with G-Cter in ubiquitin) linkage.

This sequence belongs to the RGI1 family.

It is found in the cell membrane. Its function is as follows. Involved in the control of energetic metabolism and significantly contribute to cell fitness, especially under respiratory growth conditions. The sequence is that of Respiratory growth induced protein 1 (RGI1) from Saccharomyces cerevisiae (strain RM11-1a) (Baker's yeast).